A 933-amino-acid chain; its full sequence is Thyroid peroxidase (933 aa).

The signal sequence occupies residues 1–18 (MRALAVLSVTLVMACTEA). The Extracellular segment spans residues 19–846 (FFPFISRGKE…TCVDSGRLPR (828 aa)). Asparagine 129 carries N-linked (GlcNAc...) asparagine glycosylation. Cysteine 142 and cysteine 158 are joined by a disulfide. Heme b is bound at residue aspartate 238. Residue histidine 239 is the Proton acceptor of the active site. Aspartate 240 contributes to the Ca(2+) binding site. Intrachain disulfides connect cysteine 259-cysteine 269 and cysteine 263-cysteine 286. N-linked (GlcNAc...) asparagine glycosylation is present at asparagine 307. Positions 321, 323, 325, and 327 each coordinate Ca(2+). N-linked (GlcNAc...) asparagine glycosylation occurs at asparagine 342. Heme b contacts are provided by glutamate 399 and histidine 494. Asparagine 569 is a glycosylation site (N-linked (GlcNAc...) asparagine). 2 disulfides stabilise this stretch: cysteine 598-cysteine 655 and cysteine 696-cysteine 721. Residues 740–795 (DKCGFPESVENGDFVHCEESGRRVLVYSCRHGYELQGREQLTCTQEGWDFQPPLCK) form the Sushi domain. The EGF-like; calcium-binding domain occupies 796-839 (DVNECADGAHPPCHASARCRNTKGGFQCLCADPYELGDDGRTCV). Disulfide bonds link cysteine 800–cysteine 814, cysteine 808–cysteine 823, and cysteine 825–cysteine 838. Residues 847-871 (VTWISMSLAALLIGGFAGLTSTVIC) form a helical membrane-spanning segment. The Cytoplasmic portion of the chain corresponds to 872-933 (RWTRTGTKST…RDTHRLPRAL (62 aa)). The segment at 881–933 (TLPISETGGGTPELRCGKHQAVGTSPQRAAAQDSEQESAGMEGRDTHRLPRAL) is disordered. A compositionally biased stretch (basic and acidic residues) spans 922 to 933 (EGRDTHRLPRAL).

Belongs to the peroxidase family. XPO subfamily. Interacts with DUOX1, DUOX2 and CYBA. Requires Ca(2+) as cofactor. Heme b serves as cofactor. In terms of processing, glycosylated. Post-translationally, heme is covalently bound through a H(2)O(2)-dependent autocatalytic process. Heme insertion is important for the delivery of protein at the cell surface. Cleaved in its N-terminal part.

It localises to the membrane. Its subcellular location is the cell surface. It carries out the reaction 2 iodide + H2O2 + 2 H(+) = diiodine + 2 H2O. The catalysed reaction is [thyroglobulin]-L-tyrosine + iodide + H2O2 + H(+) = [thyroglobulin]-3-iodo-L-tyrosine + 2 H2O. It catalyses the reaction [thyroglobulin]-3-iodo-L-tyrosine + iodide + H2O2 + H(+) = [thyroglobulin]-3,5-diiodo-L-tyrosine + 2 H2O. The enzyme catalyses 2 [thyroglobulin]-3,5-diiodo-L-tyrosine + H2O2 = [thyroglobulin]-L-thyroxine + [thyroglobulin]-dehydroalanine + 2 H2O. It carries out the reaction [thyroglobulin]-3-iodo-L-tyrosine + [thyroglobulin]-3,5-diiodo-L-tyrosine + H2O2 = [thyroglobulin]-3,3',5-triiodo-L-thyronine + [thyroglobulin]-dehydroalanine + 2 H2O. It participates in hormone biosynthesis; thyroid hormone biosynthesis. Iodination and coupling of the hormonogenic tyrosines in thyroglobulin to yield the thyroid hormones T(3) and T(4). The chain is Thyroid peroxidase from Homo sapiens (Human).